The sequence spans 250 residues: Probable replication-associated protein repA2 (250 aa).

It belongs to the IncFII RepA family.

This protein is essential for plasmid replication; it is involved in copy control functions. This Buchnera aphidicola subsp. Acyrthosiphon pisum (strain APS) (Acyrthosiphon pisum symbiotic bacterium) protein is Probable replication-associated protein repA2 (repA2).